The sequence spans 668 residues: MVKGKILFGDVFSALRCLEDNSISVALTSPPYWRQRDYGFKGQIGREKTPEEYIGRLIVIFRELRAKLKDDGVFFLNIGDKYKNRYGKSHLLQIPYRLAAHMIKDGWKLLDIIIWYKPNHMPSSVKDRFTNTYEPVLVFGKSDENIYTKKHPVLKIPLQQTKWKHTAVFPEKLVSSLLSRCNLKDGDYILDPFAGTGTTGAVVKKMKYQLYPKDLNVILIEKGKKFLDIITERTGIKEIKELKSSEYTWEPVNDKLAFSEDKPLIIIEDTHGETFIAKNSEEFSRIIMGMLSEEFQDFHREDAVYFFGVKNWKLSDLVLPGLLIDHGFILRNMIIIEDGSSWYPVFMLVKDTTRVNYKFYIDRIRKKPKTVLPEKWNQEDFIGLIVNDNLSKKPRKGEVVDIISTYSQDNFPKIVAVSWEDDNISLELCLNPRKDEFIMESLQFTCPHCGTQLIDTYDPLGDNICYNCQKEIYGKNSLPILKESKEIIESLESVENGEYQVGENIKPQYQKRCKESKSKFAGMERMNWGASPGARKTIIGDSFSKMRLYRLDQPTIARYLNIYMKKNDLRIKDITQALPPEYKHTVGHWFRKDFGGSIPLPEDVTLLEEILKLDKEFARILKRSVLKLQTVKHSLKGKNPGDFLELEENKLKEYLTKTYMPPSYYIKK.

The protein belongs to the N(4)/N(6)-methyltransferase family. N(4) subfamily.

It catalyses the reaction a 2'-deoxycytidine in DNA + S-adenosyl-L-methionine = an N(4)-methyl-2'-deoxycytidine in DNA + S-adenosyl-L-homocysteine + H(+). Its function is as follows. A beta subtype methylase, recognizes the double-stranded DNA sequence 5'-GCNNNNNNNGC-3', methylates C-2 on both strands, and protects the DNA from cleavage by the MwoI endonuclease. This Methanothermobacter wolfeii (Methanobacterium wolfei) protein is Type II methyltransferase M.MwoI.